Consider the following 429-residue polypeptide: Ribosomal RNA small subunit methyltransferase B (429 aa).

S-adenosyl-L-methionine contacts are provided by residues 254-260 (CAAPGGK), Asp-277, Asp-303, and Asp-322. Cys-375 serves as the catalytic Nucleophile. Residues 397–419 (ALSETGTPDQPGQQNLPGGEEGD) are disordered. The segment covering 400-412 (ETGTPDQPGQQNL) has biased composition (polar residues).

The protein belongs to the class I-like SAM-binding methyltransferase superfamily. RsmB/NOP family.

The protein resides in the cytoplasm. The catalysed reaction is cytidine(967) in 16S rRNA + S-adenosyl-L-methionine = 5-methylcytidine(967) in 16S rRNA + S-adenosyl-L-homocysteine + H(+). In terms of biological role, specifically methylates the cytosine at position 967 (m5C967) of 16S rRNA. The protein is Ribosomal RNA small subunit methyltransferase B of Salmonella paratyphi B (strain ATCC BAA-1250 / SPB7).